The following is a 292-amino-acid chain: NAD kinase (292 aa).

Residue aspartate 73 is the Proton acceptor of the active site. NAD(+)-binding positions include 73–74, 147–148, histidine 158, arginine 175, aspartate 177, 188–193, and glutamine 247; these read DG, NE, and TAYSLS.

Belongs to the NAD kinase family. A divalent metal cation is required as a cofactor.

It localises to the cytoplasm. The enzyme catalyses NAD(+) + ATP = ADP + NADP(+) + H(+). In terms of biological role, involved in the regulation of the intracellular balance of NAD and NADP, and is a key enzyme in the biosynthesis of NADP. Catalyzes specifically the phosphorylation on 2'-hydroxyl of the adenosine moiety of NAD to yield NADP. The sequence is that of NAD kinase from Shigella boydii serotype 4 (strain Sb227).